The following is a 78-amino-acid chain: Exodeoxyribonuclease 7 small subunit (78 aa).

The protein belongs to the XseB family. In terms of assembly, heterooligomer composed of large and small subunits.

The protein resides in the cytoplasm. It catalyses the reaction Exonucleolytic cleavage in either 5'- to 3'- or 3'- to 5'-direction to yield nucleoside 5'-phosphates.. In terms of biological role, bidirectionally degrades single-stranded DNA into large acid-insoluble oligonucleotides, which are then degraded further into small acid-soluble oligonucleotides. The sequence is that of Exodeoxyribonuclease 7 small subunit from Synechococcus sp. (strain JA-3-3Ab) (Cyanobacteria bacterium Yellowstone A-Prime).